A 140-amino-acid chain; its full sequence is Nucleoside diphosphate kinase (140 aa).

ATP contacts are provided by K11, F59, R87, T93, R104, and N114. H117 acts as the Pros-phosphohistidine intermediate in catalysis.

It belongs to the NDK family. In terms of assembly, homotetramer. Requires Mg(2+) as cofactor.

The protein localises to the cytoplasm. It carries out the reaction a 2'-deoxyribonucleoside 5'-diphosphate + ATP = a 2'-deoxyribonucleoside 5'-triphosphate + ADP. The catalysed reaction is a ribonucleoside 5'-diphosphate + ATP = a ribonucleoside 5'-triphosphate + ADP. In terms of biological role, major role in the synthesis of nucleoside triphosphates other than ATP. The ATP gamma phosphate is transferred to the NDP beta phosphate via a ping-pong mechanism, using a phosphorylated active-site intermediate. The protein is Nucleoside diphosphate kinase of Rhodovulum sulfidophilum (Rhodobacter sulfidophilus).